The primary structure comprises 396 residues: Elongation factor Tu (396 aa).

The tr-type G domain maps to 10–206 (KPHVNVGTIG…ALDSYIPTPE (197 aa)). A G1 region spans residues 19 to 26 (GHVDHGKT). 19 to 26 (GHVDHGKT) lines the GTP pocket. Thr26 is a Mg(2+) binding site. Residues 60–64 (GITIN) form a G2 region. Positions 81-84 (DCPG) are G3. Residues 81–85 (DCPGH) and 136–139 (NKCD) each bind GTP. The interval 136–139 (NKCD) is G4. A G5 region spans residues 174–176 (SAK).

It belongs to the TRAFAC class translation factor GTPase superfamily. Classic translation factor GTPase family. EF-Tu/EF-1A subfamily. As to quaternary structure, monomer.

It localises to the cytoplasm. It catalyses the reaction GTP + H2O = GDP + phosphate + H(+). Functionally, GTP hydrolase that promotes the GTP-dependent binding of aminoacyl-tRNA to the A-site of ribosomes during protein biosynthesis. The chain is Elongation factor Tu from Ralstonia nicotianae (strain ATCC BAA-1114 / GMI1000) (Ralstonia solanacearum).